Consider the following 140-residue polypeptide: Methylglyoxal synthase (140 aa).

The region spanning 1 to 140 (MKIALIAHDR…HDQDSNPINL (140 aa)) is the MGS-like domain. Substrate contacts are provided by residues His8, Lys12, 34–37 (TGTT), and 54–55 (SG). Asp60 serves as the catalytic Proton donor/acceptor. His87 serves as a coordination point for substrate.

The protein belongs to the methylglyoxal synthase family.

It catalyses the reaction dihydroxyacetone phosphate = methylglyoxal + phosphate. Catalyzes the formation of methylglyoxal from dihydroxyacetone phosphate. This is Methylglyoxal synthase from Latilactobacillus sakei subsp. sakei (strain 23K) (Lactobacillus sakei subsp. sakei).